Reading from the N-terminus, the 390-residue chain is MPPSRLRLLPLLLPLLWLLVLAPGRPASGLSTCKTIDMELVKRKRIEAIRGQILSKLRLASPPSQGDVPPGPLPEAVLALYNSTRDRVAGESAEPEPEPEPDYYAKEVTRVLMVDNSHNIYKSIETVAHSIYMFFNTSELREAVPDPLLLSRAELRMQRLKLNVEQHVELYQKYSNNSWRYLSNQLLTPSDTPEWLSFDVTGVVRQWLSQGEELEGFRFSAHCSCDSKDNTLRVEINGIGPKRRGDLAAIHGMNRPFLLLMATPLERAQHLHSSRHRRGLDTNYCFSSTEKNCCVRQLYIDFRKDLGWKWIHEPKGYHANFCLGPCPYIWSLDTQYSKVLALYNQHNPGASAAPCCVPQALEPLPIVYYVGRKAKVEQLSNMIVRSCKCS.

Positions 1-29 are cleaved as a signal peptide; it reads MPPSRLRLLPLLLPLLWLLVLAPGRPASG. Residues 30–74 form a straightjacket domain region; it reads LSTCKTIDMELVKRKRIEAIRGQILSKLRLASPPSQGDVPPGPLP. The arm domain stretch occupies residues 75-271; it reads EAVLALYNST…ATPLERAQHL (197 aa). 3 N-linked (GlcNAc...) asparagine glycosylation sites follow: Asn82, Asn136, and Asn176. A bowtie tail region spans residues 226–252; it reads DSKDNTLRVEINGIGPKRRGDLAAIHG. A Cell attachment site motif is present at residues 244–246; that stretch reads RGD. 4 cysteine pairs are disulfide-bonded: Cys285–Cys294, Cys293–Cys356, Cys322–Cys387, and Cys326–Cys389.

This sequence belongs to the TGF-beta family. As to quaternary structure, homodimer; disulfide-linked. Interacts with the serine proteases, HTRA1 and HTRA3: the interaction with either inhibits TGFB1-mediated signaling and the HTRA protease activity is required for this inhibition. May interact with THSD4; this interaction may lead to sequestration by FBN1 microfibril assembly and attenuation of TGFB signaling. Interacts with CD109, DPT and ASPN. Interacts with EFEMP2. Interacts with TSKU; the interaction contributes to regulation of the hair cycle. Interacts with TGFBR3. Homodimer; disulfide-linked. Interacts with transforming growth factor beta-1 (TGF-beta-1) chain; interaction is non-covalent and maintains TGF-beta-1 in a latent state; each latency-associated peptide (LAP) monomer interacts with TGF-beta-1 in the other monomer. Interacts with LTBP1; leading to regulation of TGF-beta-1 activation. Interacts with LRRC32/GARP; leading to regulation of TGF-beta-1 activation on the surface of activated regulatory T-cells (Tregs). Interacts with LRRC33/NRROS; leading to regulation of TGF-beta-1 in macrophages and microglia. Interacts (via cell attachment site) with integrins ITGAV and ITGB6 (ITGAV:ITGB6), leading to release of the active TGF-beta-1. Interacts with NREP; the interaction results in a decrease in TGFB1 autoinduction. Interacts with HSP90AB1; inhibits latent TGFB1 activation. In terms of assembly, homodimer; disulfide-linked. Interacts with TGF-beta receptors (TGFBR1 and TGFBR2), leading to signal transduction. In terms of processing, transforming growth factor beta-1 proprotein: The precursor proprotein is cleaved in the Golgi apparatus by FURIN to form Transforming growth factor beta-1 (TGF-beta-1) and Latency-associated peptide (LAP) chains, which remain non-covalently linked, rendering TGF-beta-1 inactive. N-glycosylated. Deglycosylation leads to activation of Transforming growth factor beta-1 (TGF-beta-1); mechanisms triggering deglycosylation-driven activation of TGF-beta-1 are however unclear.

Its subcellular location is the secreted. It is found in the extracellular space. The protein resides in the extracellular matrix. Transforming growth factor beta-1 proprotein: Precursor of the Latency-associated peptide (LAP) and Transforming growth factor beta-1 (TGF-beta-1) chains, which constitute the regulatory and active subunit of TGF-beta-1, respectively. Functionally, required to maintain the Transforming growth factor beta-1 (TGF-beta-1) chain in a latent state during storage in extracellular matrix. Associates non-covalently with TGF-beta-1 and regulates its activation via interaction with 'milieu molecules', such as LTBP1, LRRC32/GARP and LRRC33/NRROS, that control activation of TGF-beta-1. Interaction with LRRC33/NRROS regulates activation of TGF-beta-1 in macrophages and microglia. Interaction with LRRC32/GARP controls activation of TGF-beta-1 on the surface of activated regulatory T-cells (Tregs). Interaction with integrins (ITGAV:ITGB6 or ITGAV:ITGB8) results in distortion of the Latency-associated peptide chain and subsequent release of the active TGF-beta-1. Its function is as follows. Multifunctional protein that regulates the growth and differentiation of various cell types and is involved in various processes, such as normal development, immune function, microglia function and responses to neurodegeneration. Activation into mature form follows different steps: following cleavage of the proprotein in the Golgi apparatus, Latency-associated peptide (LAP) and Transforming growth factor beta-1 (TGF-beta-1) chains remain non-covalently linked rendering TGF-beta-1 inactive during storage in extracellular matrix. At the same time, LAP chain interacts with 'milieu molecules', such as LTBP1, LRRC32/GARP and LRRC33/NRROS that control activation of TGF-beta-1 and maintain it in a latent state during storage in extracellular milieus. TGF-beta-1 is released from LAP by integrins (ITGAV:ITGB6 or ITGAV:ITGB8): integrin-binding to LAP stabilizes an alternative conformation of the LAP bowtie tail and results in distortion of the LAP chain and subsequent release of the active TGF-beta-1. Once activated following release of LAP, TGF-beta-1 acts by binding to TGF-beta receptors (TGFBR1 and TGFBR2), which transduce signal. While expressed by many cells types, TGF-beta-1 only has a very localized range of action within cell environment thanks to fine regulation of its activation by Latency-associated peptide chain (LAP) and 'milieu molecules'. Plays an important role in bone remodeling: acts as a potent stimulator of osteoblastic bone formation, causing chemotaxis, proliferation and differentiation in committed osteoblasts. Can promote either T-helper 17 cells (Th17) or regulatory T-cells (Treg) lineage differentiation in a concentration-dependent manner. At high concentrations, leads to FOXP3-mediated suppression of RORC and down-regulation of IL-17 expression, favoring Treg cell development. At low concentrations in concert with IL-6 and IL-21, leads to expression of the IL-17 and IL-23 receptors, favoring differentiation to Th17 cells. Stimulates sustained production of collagen through the activation of CREB3L1 by regulated intramembrane proteolysis (RIP). Mediates SMAD2/3 activation by inducing its phosphorylation and subsequent translocation to the nucleus. Positively regulates odontoblastic differentiation in dental papilla cells, via promotion of IPO7-mediated translocation of phosphorylated SMAD2 to the nucleus and subsequent transcription of target genes. Can induce epithelial-to-mesenchymal transition (EMT) and cell migration in various cell types. The sequence is that of Transforming growth factor beta-1 proprotein (TGFB1) from Cavia porcellus (Guinea pig).